The sequence spans 235 residues: DNA repair protein RecO (235 aa).

The protein belongs to the RecO family.

Involved in DNA repair and RecF pathway recombination. The polypeptide is DNA repair protein RecO (Enterobacter sp. (strain 638)).